The following is a 96-amino-acid chain: UPF0235 protein Tola_0962 (96 aa).

This sequence belongs to the UPF0235 family.

In Tolumonas auensis (strain DSM 9187 / NBRC 110442 / TA 4), this protein is UPF0235 protein Tola_0962.